The sequence spans 664 residues: Phosphomethylpyrimidine synthase (664 aa).

Residues Asn235, Met264, Tyr293, His329, Ser349 to Gly351, Asp390 to Arg393, and Glu429 each bind substrate. His433 contacts Zn(2+). Tyr456 contributes to the substrate binding site. His497 lines the Zn(2+) pocket. Residues Cys577, Cys580, and Cys585 each contribute to the [4Fe-4S] cluster site.

Belongs to the ThiC family. Homodimer. [4Fe-4S] cluster serves as cofactor.

The catalysed reaction is 5-amino-1-(5-phospho-beta-D-ribosyl)imidazole + S-adenosyl-L-methionine = 4-amino-2-methyl-5-(phosphooxymethyl)pyrimidine + CO + 5'-deoxyadenosine + formate + L-methionine + 3 H(+). It functions in the pathway cofactor biosynthesis; thiamine diphosphate biosynthesis. In terms of biological role, catalyzes the synthesis of the hydroxymethylpyrimidine phosphate (HMP-P) moiety of thiamine from aminoimidazole ribotide (AIR) in a radical S-adenosyl-L-methionine (SAM)-dependent reaction. In Shewanella amazonensis (strain ATCC BAA-1098 / SB2B), this protein is Phosphomethylpyrimidine synthase.